We begin with the raw amino-acid sequence, 1173 residues long: Pumilio homolog 2 (1173 aa).

Disordered stretches follow at residues 41–68, 265–296, 480–518, 592–662, and 730–759; these read VSSAGQAHGNNPHAMPPGAPSAQVPLSG, VSKLNGRGLPNGIESDCKDFNRTPGSRQASPT, QQAATQASQGQQQVMRATSNQRPLTPNQAQQGQQPESLA, LTGA…SLGF, and PISMPLPSQTSGHSLTPPPSLSSHGSSSSL. Residues 287 to 296 show a composition bias toward polar residues; it reads TPGSRQASPT. Low complexity predominate over residues 480–492; sequence QQAATQASQGQQQ. Polar residues predominate over residues 493-518; that stretch reads VMRATSNQRPLTPNQAQQGQQPESLA. The segment covering 606 to 622 has biased composition (low complexity); it reads QQQQQQQQQQHQQQQQQ. Over residues 623–633 the composition is skewed to polar residues; that stretch reads PNANLHSNSFY. Low complexity predominate over residues 634–657; sequence GNSTMSNNSQSSSLFSPGPGQPGS. Residues 815-1155 form the PUM-HD domain; that stretch reads GRSRLLEDFR…HILAKLEKYY (341 aa). 9 Pumilio repeats span residues 835 to 870, 871 to 906, 907 to 942, 943 to 978, 979 to 1014, 1015 to 1050, 1051 to 1086, 1087 to 1129, and 1130 to 1167; these read DLMGHIVEFSQDQHGSRFIQQKLERASPAERQLVFS, EILQAAYQLMTDVFGNYVIQKFFEFGSMDQKLALAT, RIRGHVLPLALQMYGCRVIQKALESISTDQQSEMVR, ELDGHVLKCVKDQNGNHVVQKCIECVTPQSLHFIIE, AFKGQVYVLSTHPYGCRVIQRILEHCTPEQTLPILE, ELHQSTEQLVQDQYGNYVIQHVLEHGRSDDKSKIVC, EVRGQVLVLSQHKFASNVVEKCVTHSSRTERAFLID, EICC…IIMH, and KIRPHITTLRKYTYGKHILAKLEKYYMKNSPDLGLLVG. Positions 850 to 854 are adenine-nucleotide binding in RNA target; it reads SRFIQ. A uracil-nucleotide binding in RNA target region spans residues 886–890; the sequence is NYVIQ. Residues 922 to 926 form an adenine-nucleotide binding in RNA target region; that stretch reads CRVIQ. The segment at 958-962 is non-specific-nucleotide binding in RNA target; it reads NHVVQ. The interval 994–998 is adenine-nucleotide binding in RNA target; sequence CRVIQ. The segment at 1030 to 1034 is uracil-nucleotide binding in RNA target; it reads NYVIQ. The tract at residues 1066 to 1070 is guanine-nucleotide binding in RNA target; sequence SNVVE. Residues 1109–1113 form a uracil-nucleotide binding in RNA target region; sequence NYVVQ.

As to quaternary structure, component of a complex with papd4, sympk, tacc3, parn, dazl and cpeb1. Phosphorylated.

It is found in the cytoplasm. The protein resides in the P-body. It localises to the cytoplasmic granule. Its function is as follows. Sequence-specific RNA-binding protein that acts as a post-transcriptional repressor by binding the 3'-UTR of mRNA targets. Binds to an RNA consensus sequence, the Pumilio Response Element (PRE), 5'-UGUANAUA-3', that is related to the Nanos Response Element (NRE). Mediates post-transcriptional repression of transcripts via different mechanisms: acts via direct recruitment of deadenylase complexes leading to translational inhibition and mRNA degradation. Also mediates deadenylation-independent repression by promoting accessibility of miRNAs. The sequence is that of Pumilio homolog 2 (pum2) from Xenopus laevis (African clawed frog).